Reading from the N-terminus, the 532-residue chain is Methionine--tRNA ligase (532 aa).

Positions 16–26 (YYVNDVPHLGS) match the 'HIGH' region motif. 4 residues coordinate Zn(2+): Cys131, Cys134, Cys149, and His152. A 'KMSKS' region motif is present at residues 305–309 (KMGKS). Lys308 is an ATP binding site.

It belongs to the class-I aminoacyl-tRNA synthetase family. MetG type 2A subfamily. As to quaternary structure, monomer. Requires Zn(2+) as cofactor.

The protein resides in the cytoplasm. It carries out the reaction tRNA(Met) + L-methionine + ATP = L-methionyl-tRNA(Met) + AMP + diphosphate. Is required not only for elongation of protein synthesis but also for the initiation of all mRNA translation through initiator tRNA(fMet) aminoacylation. The protein is Methionine--tRNA ligase (metG) of Synechocystis sp. (strain ATCC 27184 / PCC 6803 / Kazusa).